The chain runs to 831 residues: Multiphosphoryl transfer protein 1 (831 aa).

The HPr domain maps to 1 to 90; that stretch reads MLTIQFLCPL…EYIQVRFIDS (90 aa). His15 (pros-phosphohistidine intermediate; for HPr activity) is an active-site residue. His15 carries the post-translational modification Phosphohistidine; by EI. Residues 119–650 form a PTS EI region; the sequence is GNVLASGVGV…AVKSQLRQLD (532 aa). His298 acts as the Tele-phosphohistidine intermediate; for PTS EI activity in catalysis. At His298 the chain carries Phosphohistidine; by autocatalysis. Residues Arg405 and Arg441 each contribute to the phosphoenolpyruvate site. The Mg(2+) site is built by Glu540 and Asp564. Residues 563–564 and Arg574 contribute to the phosphoenolpyruvate site; that span reads ND. Cys611 functions as the Proton donor; for EI activity in the catalytic mechanism. The PTS EIIA type-2 domain maps to 685–828; sequence PLLALENIFV…QSILTLLETE (144 aa). Catalysis depends on His747, which acts as the Tele-phosphohistidine intermediate; for PTS EIIA activity. The residue at position 747 (His747) is a Phosphohistidine; by HPr.

Belongs to the PEP-utilizing enzyme family. Requires Mg(2+) as cofactor.

The protein resides in the cytoplasm. The enzyme catalyses L-histidyl-[protein] + phosphoenolpyruvate = N(pros)-phospho-L-histidyl-[protein] + pyruvate. The catalysed reaction is D-fructose(out) + N(pros)-phospho-L-histidyl-[protein] = D-fructose 1-phosphate(in) + L-histidyl-[protein]. Multifunctional protein that includes general (non sugar-specific) and sugar-specific components of the phosphoenolpyruvate-dependent sugar phosphotransferase system (sugar PTS). This major carbohydrate active transport system catalyzes the phosphorylation of incoming sugar substrates concomitantly with their translocation across the cell membrane. The enzyme II FryABC PTS system is involved in fructose transport. The sequence is that of Multiphosphoryl transfer protein 1 (fryA) from Escherichia coli (strain K12).